A 459-amino-acid chain; its full sequence is tRNA modification GTPase MnmE (459 aa).

(6S)-5-formyl-5,6,7,8-tetrahydrofolate is bound by residues Arg-22, Glu-85, and Arg-124. The TrmE-type G domain occupies 221–380 (GLSTVIVGKP…LEIQIRDLFF (160 aa)). Asn-231 serves as a coordination point for K(+). Residues 231–236 (NVGKSS), 250–256 (TEVAGTT), and 275–278 (DTAG) each bind GTP. Ser-235 provides a ligand contact to Mg(2+). Residues Thr-250, Val-252, and Thr-255 each contribute to the K(+) site. Residue Thr-256 participates in Mg(2+) binding. Lys-459 lines the (6S)-5-formyl-5,6,7,8-tetrahydrofolate pocket.

The protein belongs to the TRAFAC class TrmE-Era-EngA-EngB-Septin-like GTPase superfamily. TrmE GTPase family. Homodimer. Heterotetramer of two MnmE and two MnmG subunits. The cofactor is K(+).

It is found in the cytoplasm. Exhibits a very high intrinsic GTPase hydrolysis rate. Involved in the addition of a carboxymethylaminomethyl (cmnm) group at the wobble position (U34) of certain tRNAs, forming tRNA-cmnm(5)s(2)U34. The polypeptide is tRNA modification GTPase MnmE (Staphylococcus aureus (strain USA300 / TCH1516)).